The following is a 1501-amino-acid chain: 1-phosphatidylinositol 4,5-bisphosphate phosphodiesterase eta-2 (1501 aa).

The disordered stretch occupies residues 28–47 (RGFSGLQGGRRRGRGEKGIP). The segment at 75 to 229 (MPGPQPSAAS…WVTGLRYLMA (155 aa)) is necessary for plasma membrane localization. Positions 121-229 (SAMQEGTQMV…WVTGLRYLMA (109 aa)) constitute a PH domain. EF-hand domains lie at 243–278 (TRDQ…LNVN) and 279–315 (LPRQ…MSTR). Ca(2+)-binding residues include Asp-256, Asn-258, Asp-260, Ser-262, and Glu-267. The 146-residue stretch at 400–545 (QDMTQPLSHY…LKGKILVKGK (146 aa)) folds into the PI-PLC X-box domain. Residue His-415 is part of the active site. Residues Asn-416, Glu-445, and Asp-447 each coordinate Ca(2+). The active site involves His-459. Glu-494 is a binding site for Ca(2+). The substrate site is built by Lys-543 and Lys-545. Disordered stretches follow at residues 551-570 (ISED…DEME) and 609-700 (DPND…QKKT). Residues 553 to 570 (EDAEEGEVSDEDSADEME) are compositionally biased toward acidic residues. Ser-561 and Ser-565 each carry phosphoserine. Residues 626 to 638 (RKAEAKKGQSKVE) show a composition bias toward basic and acidic residues. The span at 662-673 (SKRKKKGSKIKK) shows a compositional bias: basic residues. 2 positions are modified to phosphoserine: Ser-676 and Ser-686. A PI-PLC Y-box domain is found at 707-821 (LSDLVKYTKS…GYVLKPQCMC (115 aa)). 2 residues coordinate substrate: Ser-734 and Arg-761. Positions 821 to 950 (CQGVFNPNSE…PGYRHVYLEG (130 aa)) constitute a C2 domain. Ca(2+) is bound by residues Ile-865, Asp-867, Asp-891, Asp-920, His-921, and Asp-922. Disordered stretches follow at residues 986-1073 (GSLD…RLFP), 1089-1238 (EEPA…SSND), 1273-1305 (SAAR…DELQ), and 1398-1469 (GDIT…GACS). Over residues 1089 to 1107 (EEPALGPGLPLQAAAPTGP) the composition is skewed to low complexity. 2 stretches are compositionally biased toward basic and acidic residues: residues 1142-1151 (GGRENEEPPL) and 1215-1227 (LWQR…HRDS). The segment covering 1421–1439 (RRSSSRSQSRVRAIASRAR) has biased composition (low complexity). Over residues 1440 to 1463 (QAQERQQRLRGQDSRGPPEEERGT) the composition is skewed to basic and acidic residues.

Ca(2+) is required as a cofactor. Specifically detected in the brain, with higher level in cerebral cortex, olfactory bulb and hippocampus (at protein level). Expressed in the pyramidal cells of the hippocampus, but also in eye and lung.

It localises to the cytoplasm. The protein localises to the cell membrane. The catalysed reaction is a 1,2-diacyl-sn-glycero-3-phospho-(1D-myo-inositol-4,5-bisphosphate) + H2O = 1D-myo-inositol 1,4,5-trisphosphate + a 1,2-diacyl-sn-glycerol + H(+). Its activity is regulated as follows. Activity is stimulated by GNB1:GNG2. Its function is as follows. The production of the second messenger molecules diacylglycerol (DAG) and inositol 1,4,5-trisphosphate (IP3) is mediated by activated phosphatidylinositol-specific phospholipase C enzymes. This phospholipase activity is very sensitive to calcium. May be important for formation and maintenance of the neuronal network in the postnatal brain. In Mus musculus (Mouse), this protein is 1-phosphatidylinositol 4,5-bisphosphate phosphodiesterase eta-2.